The chain runs to 461 residues: UPF0210 protein Ddes_0622 (461 aa).

This sequence belongs to the UPF0210 family. As to quaternary structure, homodimer.

The sequence is that of UPF0210 protein Ddes_0622 from Desulfovibrio desulfuricans (strain ATCC 27774 / DSM 6949 / MB).